We begin with the raw amino-acid sequence, 398 residues long: Succinate--CoA ligase [ADP-forming] subunit beta (398 aa).

An ATP-grasp domain is found at 9-254 (KAVLREFGVP…ESEEDAKEIE (246 aa)). Residues Lys46, 53–55 (GRG), Glu109, Ser112, and Glu117 contribute to the ATP site. The Mg(2+) site is built by Asn209 and Asp223. Residues Asn274 and 331–333 (GIM) each bind substrate.

It belongs to the succinate/malate CoA ligase beta subunit family. As to quaternary structure, heterotetramer of two alpha and two beta subunits. It depends on Mg(2+) as a cofactor.

It catalyses the reaction succinate + ATP + CoA = succinyl-CoA + ADP + phosphate. The enzyme catalyses GTP + succinate + CoA = succinyl-CoA + GDP + phosphate. It functions in the pathway carbohydrate metabolism; tricarboxylic acid cycle; succinate from succinyl-CoA (ligase route): step 1/1. Functionally, succinyl-CoA synthetase functions in the citric acid cycle (TCA), coupling the hydrolysis of succinyl-CoA to the synthesis of either ATP or GTP and thus represents the only step of substrate-level phosphorylation in the TCA. The beta subunit provides nucleotide specificity of the enzyme and binds the substrate succinate, while the binding sites for coenzyme A and phosphate are found in the alpha subunit. This is Succinate--CoA ligase [ADP-forming] subunit beta from Rhodopseudomonas palustris (strain HaA2).